An 83-amino-acid polypeptide reads, in one-letter code: MLDAILSNYLYYPSILAFLFGVLMGAKYRHKIGNIFGYLILTVVIAYFLKAFPYYDLLPLSCSYLSAVIGIIIGNRLFGGKMI.

The next 3 helical transmembrane spans lie at 4–24 (AILSNYLYYPSILAFLFGVLM), 32–52 (IGNIFGYLILTVVIAYFLKAF), and 54–74 (YYDLLPLSCSYLSAVIGIIIG).

The protein resides in the cell membrane. This is an uncharacterized protein from Methanocaldococcus jannaschii (strain ATCC 43067 / DSM 2661 / JAL-1 / JCM 10045 / NBRC 100440) (Methanococcus jannaschii).